The primary structure comprises 431 residues: Nuclear receptor subfamily 1 group I member 2 (431 aa).

NR C4-type zinc fingers lie at residues 38–58 (CRVC…CEGC) and 74–99 (CPFR…LRKC). Residues 38–104 (CRVCGDKANG…RLRKCLESGM (67 aa)) constitute a DNA-binding region (nuclear receptor). The Bipartite nuclear localization signal motif lies at 63-89 (RRAMKRNVRLRCPFRKGTCEITRKTRR). The tract at residues 105–142 (KKEMIMSDAAVEQRRALIKRKKREKIEAPPPGGQGLTE) is hinge. The NR LBD domain occupies 143 to 430 (EQQALIQELM…LMQELFSSTD (288 aa)). Residues serine 244 and 282–285 (ILRF) contribute to the hyperforin site.

It belongs to the nuclear hormone receptor family. NR1 subfamily. In terms of assembly, heterodimer with RXRA. Interacts with NCOA1. Interacts (via domain NR LBD) with CRY1 and CRY2 in a ligand-dependent manner.

Its subcellular location is the nucleus. In terms of biological role, nuclear receptor that binds and is activated by a variety of endogenous and xenobiotic compounds. Transcription factor that activates the transcription of multiple genes involved in the metabolism and secretion of potentially harmful xenobiotics, endogenous compounds and drugs. Response to specific ligands is species-specific, due to differences in the ligand-binding domain. Activated by naturally occurring steroids, such as pregnenolone and progesterone. Binds to a response element in the promoters of the CYP3A4 and ABCB1/MDR1 genes. The protein is Nuclear receptor subfamily 1 group I member 2 (Nr1i2) of Rattus norvegicus (Rat).